The following is a 975-amino-acid chain: Monofunctional C1-tetrahydrofolate synthase, mitochondrial (975 aa).

A mitochondrion-targeting transit peptide spans 1–30; it reads MSARLPFVLRRLARPQHPGSPRRLPSLCRA. The tract at residues 13–45 is disordered; that stretch reads ARPQHPGSPRRLPSLCRASSGRGSGCGGGEGLL. The methylenetetrahydrofolate dehydrogenase and cyclohydrolase stretch occupies residues 31–345; that stretch reads SSGRGSGCGG…REQQHRRWRL (315 aa). The span at 34–44 shows a compositional bias: gly residues; the sequence is RGSGCGGGEGL. Lys-187 carries the post-translational modification N6-acetyllysine; alternate. Lys-187 carries the post-translational modification N6-succinyllysine; alternate. The segment at 346–975 is formyltetrahydrofolate synthetase; that stretch reads HCLKLQPLSP…TETEQVKGLF (630 aa). Ser-354 carries the phosphoserine modification. Position 420-427 (420-427) interacts with ATP; the sequence is TPLGEGKS. At Lys-593 the chain carries N6-succinyllysine.

It in the N-terminal section; belongs to the tetrahydrofolate dehydrogenase/cyclohydrolase family. The protein in the C-terminal section; belongs to the formate--tetrahydrofolate ligase family. As to quaternary structure, homodimer.

Its subcellular location is the mitochondrion. It carries out the reaction (6S)-5,6,7,8-tetrahydrofolate + formate + ATP = (6R)-10-formyltetrahydrofolate + ADP + phosphate. It functions in the pathway one-carbon metabolism; tetrahydrofolate interconversion. In terms of biological role, may provide the missing metabolic reaction required to link the mitochondria and the cytoplasm in the mammalian model of one-carbon folate metabolism complementing thus the enzymatic activities of MTHFD2. This is Monofunctional C1-tetrahydrofolate synthase, mitochondrial (MTHFD1L) from Bos taurus (Bovine).